The following is a 260-amino-acid chain: 1-(5-phosphoribosyl)-5-[(5-phosphoribosylamino)methylideneamino] imidazole-4-carboxamide isomerase (260 aa).

Asp8 (proton acceptor) is an active-site residue. The active-site Proton donor is Asp130.

It belongs to the HisA/HisF family.

Its subcellular location is the cytoplasm. It catalyses the reaction 1-(5-phospho-beta-D-ribosyl)-5-[(5-phospho-beta-D-ribosylamino)methylideneamino]imidazole-4-carboxamide = 5-[(5-phospho-1-deoxy-D-ribulos-1-ylimino)methylamino]-1-(5-phospho-beta-D-ribosyl)imidazole-4-carboxamide. The protein operates within amino-acid biosynthesis; L-histidine biosynthesis; L-histidine from 5-phospho-alpha-D-ribose 1-diphosphate: step 4/9. This is 1-(5-phosphoribosyl)-5-[(5-phosphoribosylamino)methylideneamino] imidazole-4-carboxamide isomerase from Chlorobaculum tepidum (strain ATCC 49652 / DSM 12025 / NBRC 103806 / TLS) (Chlorobium tepidum).